A 137-amino-acid polypeptide reads, in one-letter code: MRILGLDVGTKTVGVAMSDEMGWTAQGLETIRINEERGHFGFDRISELVKQYNVDKIVVGLPKNMNGTIGPRGEACQQFAENLRNLLQLEVVMWDERLSTMAAERLLISADVSRKKRKQVIDKMAAVVILQGFLDSK.

This sequence belongs to the YqgF nuclease family.

Its subcellular location is the cytoplasm. In terms of biological role, could be a nuclease involved in processing of the 5'-end of pre-16S rRNA. The polypeptide is Putative pre-16S rRNA nuclease (Bacillus mycoides (strain KBAB4) (Bacillus weihenstephanensis)).